The chain runs to 277 residues: Shikimate dehydrogenase (NADP(+)) (277 aa).

Residues 15–17 (SKS) and Thr62 each bind shikimate. Lys66 functions as the Proton acceptor in the catalytic mechanism. NADP(+) is bound at residue Glu78. Shikimate contacts are provided by Asn87 and Asp103. NADP(+)-binding positions include 127 to 131 (GAGGA), 151 to 156 (NRTHEK), and Gly238.

Belongs to the shikimate dehydrogenase family. In terms of assembly, homodimer.

It catalyses the reaction shikimate + NADP(+) = 3-dehydroshikimate + NADPH + H(+). It participates in metabolic intermediate biosynthesis; chorismate biosynthesis; chorismate from D-erythrose 4-phosphate and phosphoenolpyruvate: step 4/7. Involved in the biosynthesis of the chorismate, which leads to the biosynthesis of aromatic amino acids. Catalyzes the reversible NADPH linked reduction of 3-dehydroshikimate (DHSA) to yield shikimate (SA). The polypeptide is Shikimate dehydrogenase (NADP(+)) (Shewanella frigidimarina (strain NCIMB 400)).